Consider the following 364-residue polypeptide: Chorismate synthase (364 aa).

Residues 41–60 (MQHDLDRRRPGTSRYTTARR) are disordered. The NADP(+) site is built by Arg48 and Arg54. Residues 125 to 127 (RSS), 238 to 239 (NA), Gly278, 293 to 297 (KPTSS), and Arg319 each bind FMN.

Belongs to the chorismate synthase family. In terms of assembly, homotetramer. The cofactor is FMNH2.

It carries out the reaction 5-O-(1-carboxyvinyl)-3-phosphoshikimate = chorismate + phosphate. The protein operates within metabolic intermediate biosynthesis; chorismate biosynthesis; chorismate from D-erythrose 4-phosphate and phosphoenolpyruvate: step 7/7. Its function is as follows. Catalyzes the anti-1,4-elimination of the C-3 phosphate and the C-6 proR hydrogen from 5-enolpyruvylshikimate-3-phosphate (EPSP) to yield chorismate, which is the branch point compound that serves as the starting substrate for the three terminal pathways of aromatic amino acid biosynthesis. This reaction introduces a second double bond into the aromatic ring system. In Shewanella baltica (strain OS185), this protein is Chorismate synthase.